The primary structure comprises 125 residues: MDELRLIGRCIAVKMVSPRPRTSLTRGDFRGVSWDKREWKAIIKRRGSRFVRAELIPRSRDDNGQCISILFSDDTSGITMSAGVCKFLLVFDPTVEIFLDIPRDAQLNDSITFEELDPPVTISPY.

This is Protein 5 (5) from Hordeum vulgare (Barley).